The primary structure comprises 451 residues: Homeobox protein meis3-B (451 aa).

The segment at 33–64 is disordered; the sequence is HHSLSQSTPYGSTGAAHRVPMPPGMGSNDGLK. Polar residues predominate over residues 34–43; the sequence is HSLSQSTPYG. The MEIS N-terminal domain occupies 102 to 185; that stretch reads GGDVCSSDSF…PIDLVIDDRD (84 aa). A disordered region spans residues 206–272; that stretch reads NNTWIRDHDE…RDKKRNKKRG (67 aa). Positions 218 to 230 are enriched in low complexity; the sequence is STHSGTPGPSSGG. Positions 231–242 are enriched in polar residues; it reads LASQSGDNSSEQ. A DNA-binding region (homeobox) is located at residues 267–329; that stretch reads RNKKRGIFPK…NARRRIVQPM (63 aa).

It belongs to the TALE/MEIS homeobox family.

The protein localises to the nucleus. Its function is as follows. A caudalizing protein which is required to pattern the anterior/posterior (A/P) axis during central nervous system (CNS) formation. Inhibits anterior neural expression and acts as a transcriptional activator to induce posterior neural gene expression. Maintains a proper A/P balance required for hindbrain formation by activating the FGF/MAPK pathway, which modulates the planar cell polarity (PCP) pathway. Interacts with retinoid signaling during hindbrain patterning. This Xenopus laevis (African clawed frog) protein is Homeobox protein meis3-B (meis3-b).